Consider the following 505-residue polypeptide: Prenylcysteine oxidase 1 (505 aa).

An N-terminal signal peptide occupies residues 1 to 27; that stretch reads MGRVVAELVSSLLGLWLLLCSCGCPEG. Residues Asn196, Asn323, and Asn353 are each glycosylated (N-linked (GlcNAc...) asparagine).

This sequence belongs to the prenylcysteine oxidase family. Requires FAD as cofactor.

It is found in the lysosome. The enzyme catalyses an S-polyprenyl-L-cysteine + O2 + H2O = a polyprenal + L-cysteine + H2O2. It catalyses the reaction S-(2E,6E)-farnesyl-L-cysteine + O2 + H2O = (2E,6E)-farnesal + L-cysteine + H2O2. It carries out the reaction [(2E,6E,10E)-geranylgeranyl]-L-cysteine + O2 + H2O = (2E,6E,10E)-geranylgeranial + L-cysteine + H2O2. In terms of biological role, prenylcysteine oxidase that cleaves the thioether bond of prenyl-L-cysteines, such as farnesylcysteine and geranylgeranylcysteine. Only active against free prenylcysteines and not prenylcysteine residues within prenylated proteins or peptides. Involved in the final step in the degradation of prenylated proteins, by degrading prenylcysteines after the protein has been degraded. This chain is Prenylcysteine oxidase 1, found in Pongo abelii (Sumatran orangutan).